We begin with the raw amino-acid sequence, 158 residues long: SsrA-binding protein (158 aa).

This sequence belongs to the SmpB family.

It is found in the cytoplasm. In terms of biological role, required for rescue of stalled ribosomes mediated by trans-translation. Binds to transfer-messenger RNA (tmRNA), required for stable association of tmRNA with ribosomes. tmRNA and SmpB together mimic tRNA shape, replacing the anticodon stem-loop with SmpB. tmRNA is encoded by the ssrA gene; the 2 termini fold to resemble tRNA(Ala) and it encodes a 'tag peptide', a short internal open reading frame. During trans-translation Ala-aminoacylated tmRNA acts like a tRNA, entering the A-site of stalled ribosomes, displacing the stalled mRNA. The ribosome then switches to translate the ORF on the tmRNA; the nascent peptide is terminated with the 'tag peptide' encoded by the tmRNA and targeted for degradation. The ribosome is freed to recommence translation, which seems to be the essential function of trans-translation. This chain is SsrA-binding protein, found in Psychrobacter sp. (strain PRwf-1).